A 134-amino-acid polypeptide reads, in one-letter code: D-dopachrome decarboxylase-like protein (134 aa).

This sequence belongs to the MIF family.

It is found in the cytoplasm. Functionally, may have lyase activity. The protein is D-dopachrome decarboxylase-like protein (DDTL) of Homo sapiens (Human).